Here is a 431-residue protein sequence, read N- to C-terminus: Glutamate-1-semialdehyde 2,1-aminomutase (431 aa).

An N6-(pyridoxal phosphate)lysine modification is found at K269.

Belongs to the class-III pyridoxal-phosphate-dependent aminotransferase family. HemL subfamily. As to quaternary structure, homodimer. Pyridoxal 5'-phosphate serves as cofactor.

The protein localises to the cytoplasm. It carries out the reaction (S)-4-amino-5-oxopentanoate = 5-aminolevulinate. It functions in the pathway porphyrin-containing compound metabolism; protoporphyrin-IX biosynthesis; 5-aminolevulinate from L-glutamyl-tRNA(Glu): step 2/2. Its pathway is porphyrin-containing compound metabolism; chlorophyll biosynthesis. This Chlorobium phaeovibrioides (strain DSM 265 / 1930) (Prosthecochloris vibrioformis (strain DSM 265)) protein is Glutamate-1-semialdehyde 2,1-aminomutase.